A 235-amino-acid chain; its full sequence is Aspartate/glutamate leucyltransferase (235 aa).

Belongs to the R-transferase family. Bpt subfamily.

The protein resides in the cytoplasm. The catalysed reaction is N-terminal L-glutamyl-[protein] + L-leucyl-tRNA(Leu) = N-terminal L-leucyl-L-glutamyl-[protein] + tRNA(Leu) + H(+). The enzyme catalyses N-terminal L-aspartyl-[protein] + L-leucyl-tRNA(Leu) = N-terminal L-leucyl-L-aspartyl-[protein] + tRNA(Leu) + H(+). Its function is as follows. Functions in the N-end rule pathway of protein degradation where it conjugates Leu from its aminoacyl-tRNA to the N-termini of proteins containing an N-terminal aspartate or glutamate. The protein is Aspartate/glutamate leucyltransferase of Shewanella putrefaciens (strain CN-32 / ATCC BAA-453).